Here is a 346-residue protein sequence, read N- to C-terminus: Putative toluene-4-sulfonate monooxygenase system iron-sulfur subunit TsaM2 (346 aa).

A Rieske domain is found at 7–108; that stretch reads WYVAGMATDC…LVERHGLLWI (102 aa). [2Fe-2S] cluster-binding residues include C47, H49, C66, and H69.

In terms of assembly, homotetramer. Part of the p-toluenesulfonate methyl-monooxygenase complex TsaBM, comprising the reductase TsaB and the oxygenase TsaM. Requires [2Fe-2S] cluster as cofactor.

The catalysed reaction is toluene-4-sulfonate + NADH + O2 + H(+) = 4-(hydroxymethyl)benzenesulfonate + NAD(+) + H2O. Functionally, involved in the toluene-4-sulfonate degradation pathway. Does not discriminate between the sulfonate and the carboxyl substituents and can also be involved in the p-toluenecarboxylate degradation pathway. The sequence is that of Putative toluene-4-sulfonate monooxygenase system iron-sulfur subunit TsaM2 (tsaM2) from Comamonas testosteroni (Pseudomonas testosteroni).